The chain runs to 336 residues: Cytosolic Fe-S cluster assembly factor NBP35 (336 aa).

The interval 1-20 (MIATQRPFPIPSPVPLAPSS) is disordered. Residues Cys-35, Cys-49, Cys-52, and Cys-58 each contribute to the [4Fe-4S] cluster site. 88-95 (GKGGVGKS) lines the ATP pocket. The [4Fe-4S] cluster site is built by Cys-261 and Cys-264.

This sequence belongs to the Mrp/NBP35 ATP-binding proteins family. NUBP1/NBP35 subfamily. Heterotetramer of 2 NBP35 and 2 CFD1 chains. [4Fe-4S] cluster serves as cofactor.

The protein localises to the cytoplasm. In terms of biological role, component of the cytosolic iron-sulfur (Fe/S) protein assembly (CIA) machinery. Required for maturation of extramitochondrial Fe-S proteins. The NBP35-CFD1 heterotetramer forms a Fe-S scaffold complex, mediating the de novo assembly of an Fe-S cluster and its transfer to target apoproteins. This chain is Cytosolic Fe-S cluster assembly factor NBP35, found in Cryptococcus neoformans var. neoformans serotype D (strain B-3501A) (Filobasidiella neoformans).